The following is a 314-amino-acid chain: Glucocorticoid receptor (314 aa).

Residues alanine 1–threonine 44 are disordered. Residues alanine 1 to leucine 281 form a modulating region. Residues threonine 10–valine 21 are compositionally biased toward basic and acidic residues. Residues serine 65, serine 73, and serine 88 each carry the phosphoserine modification. A Glycyl lysine isopeptide (Lys-Gly) (interchain with G-Cter in SUMO2) cross-link involves residue lysine 120. Serine 129 bears the Phosphoserine mark. Glycyl lysine isopeptide (Lys-Gly) (interchain with G-Cter in SUMO); alternate cross-links involve residues lysine 139 and lysine 155. Glycyl lysine isopeptide (Lys-Gly) (interchain with G-Cter in SUMO2); alternate cross-links involve residues lysine 139 and lysine 155. Serine 266 carries the post-translational modification Phosphoserine. A Glycyl lysine isopeptide (Lys-Gly) (interchain with G-Cter in ubiquitin) cross-link involves residue lysine 280. The NR C4-type zinc finger occupies cysteine 282–histidine 314. A DNA-binding region (nuclear receptor) is located at residues cysteine 282–histidine 314.

It belongs to the nuclear hormone receptor family. NR3 subfamily. In terms of assembly, heteromultimeric cytoplasmic complex with HSP90AA1, HSPA1A/HSPA1B, and FKBP5 or another immunophilin such as PPID, STIP1, or the immunophilin homolog PPP5C. Upon ligand binding FKBP5 dissociates from the complex and FKBP4 takes its place, thereby linking the complex to dynein and mediating transport to the nucleus, where the complex dissociates. Probably forms a complex composed of chaperones HSP90 and HSP70, co-chaperones CDC37, PPP5C, TSC1 and client protein TSC2, CDK4, AKT, RAF1 and NR3C1; this complex does not contain co-chaperones STIP1/HOP and PTGES3/p23. Directly interacts with UNC45A. Binds to DNA as a homodimer, and as heterodimer with NR3C2 or the retinoid X receptor. Binds STAT5A and STAT5B homodimers and heterodimers. Interacts with NRIP1, POU2F1, POU2F2 and TRIM28. Interacts with several coactivator complexes, including the SMARCA4 complex, CREBBP/EP300, TADA2L (Ada complex) and p160 coactivators such as NCOA2 and NCOA6. Interaction with BAG1 inhibits transactivation. Interacts with HEXIM1 and TGFB1I1. Interacts with NCOA1. Interacts with NCOA3, SMARCA4, SMARCC1, SMARCD1, and SMARCE1. Interacts with CLOCK, CRY1 and CRY2 in a ligand-dependent fashion. Interacts with CIART. Interacts with RWDD3. Interacts with UBE2I/UBC9 and this interaction is enhanced in the presence of RWDD3. Interacts with GRIP1. Interacts with NR4A3 (via nuclear receptor DNA-binding domain), represses transcription activity of NR4A3 on the POMC promoter Nur response element (NurRE). Directly interacts with PNRC2 to attract and form a complex with UPF1 and DCP1A; the interaction leads to rapid mRNA degradation. Interacts with GSK3B. Interacts with FNIP1 and FNIP2. Interacts (via C-terminus) with HNRNPU (via C-terminus). Interacts with MCM3AP. Interacts (via domain NR LBD) with HSP90AA1 and HSP90AB1. In the absence of hormonal ligand, interacts with TACC1. Interacts (via NR LBD domain) with ZNF764 (via KRAB domain); the interaction regulates transcription factor activity of NR3C1 by directing its actions toward certain biologic pathways. Acetylation by CLOCK reduces its binding to glucocorticoid response elements and its transcriptional activity. In terms of processing, increased proteasome-mediated degradation in response to glucocorticoids. Post-translationally, phosphorylated in the absence of hormone; becomes hyperphosphorylated in the presence of glucocorticoid. The Ser-65, Ser-88 and Ser-266-phosphorylated forms are mainly cytoplasmic, and the Ser-73-phosphorylated form is nuclear. Phosphorylation at Ser-73 increases transcriptional activity. Phosphorylation at Ser-65, Ser-88 and Ser-266 decreases signaling capacity. Phosphorylation at Ser-266 may protect from glucocorticoid-induced apoptosis. Phosphorylation at Ser-65 and Ser-73 is not required in regulation of chromosome segregation. May be dephosphorylated by PPP5C, attenuates NR3C1 action. Ubiquitinated by UBR5, leading to its degradation: UBR5 specifically recognizes and binds ligand-bound NR3C1 when it is not associated with coactivators (NCOAs). In presence of NCOAs, the UBR5-degron is not accessible, preventing its ubiquitination and degradation. In terms of processing, sumoylation at Lys-139 and Lys-155 negatively regulates its transcriptional activity. Heat shock increases sumoylation in a RWDD3-dependent manner.

The protein resides in the cytoplasm. Its subcellular location is the nucleus. It is found in the mitochondrion. The protein localises to the cytoskeleton. It localises to the spindle. The protein resides in the microtubule organizing center. Its subcellular location is the centrosome. It is found in the chromosome. The protein localises to the nucleoplasm. In terms of biological role, receptor for glucocorticoids (GC). Has a dual mode of action: as a transcription factor that binds to glucocorticoid response elements (GRE), both for nuclear and mitochondrial DNA, and as a modulator of other transcription factors. Affects inflammatory responses, cellular proliferation and differentiation in target tissues. Involved in chromatin remodeling. Plays a role in rapid mRNA degradation by binding to the 5' UTR of target mRNAs and interacting with PNRC2 in a ligand-dependent manner which recruits the RNA helicase UPF1 and the mRNA-decapping enzyme DCP1A, leading to RNA decay. Could act as a coactivator for STAT5-dependent transcription upon growth hormone (GH) stimulation and could reveal an essential role of hepatic GR in the control of body growth. Mediates glucocorticoid-induced apoptosis. Promotes accurate chromosome segregation during mitosis. May act as a tumor suppressor. May play a negative role in adipogenesis through the regulation of lipolytic and antilipogenic gene expression. The polypeptide is Glucocorticoid receptor (NR3C1) (Ovis aries (Sheep)).